Reading from the N-terminus, the 276-residue chain is MAGKKNNNNGQYIILRTPEQQVEIDQRNARRAQMGRMKKARQPVQRYLQQHGLRNGLSGRGGYIVAPTSGGVVTRPIVPKFSNRGDSTIVRNTEILNNQILAALGAFNTTNSALIAAAPSWLASIADLYSKYRWLSCEIIYIPKCPTTTSGSIAMAFTYDRNDAAPTARAQLSQSYKAINFPPYAGYDGAAYLNSNQGAGSAIAVQLDVTKLDKPWYPTISSAGFGALSVLDQNQFCPASLVVASDGGPATATPAGDLFIKYVIEFIEPINPTMNV.

The tract at residues 1–85 (MAGKKNNNNG…PIVPKFSNRG (85 aa)) is r domain, interaction with RNA. Positions 86-266 (DSTIVRNTEI…DLFIKYVIEF (181 aa)) are s domain, virion shell. The interval 267 to 276 (IEPINPTMNV) is p domain, projecting.

Belongs to the icosahedral plant coat protein family. In terms of assembly, homomultimer.

Its subcellular location is the virion. Its function is as follows. Capsid protein self-assembles to form an icosahedral capsid with a T=3 symmetry, about 28 nm in diameter, and consisting of 180 capsid proteins. The protein is Capsid protein of Tobacco necrosis virus (strain A) (TNV-A).